Consider the following 675-residue polypeptide: Putative elongation factor TypA-like SVR3, chloroplastic (675 aa).

Residues 1-58 constitute a chloroplast transit peptide; it reads MELSLSTSSASPAVLRRQASPLLHKQQVLGVSFASALKPGGGALRFPSRRPLPRPITC. Positions 43-76 are disordered; the sequence is ALRFPSRRPLPRPITCSASPSTAEPASEVKKKQL. Residues 59-68 show a composition bias toward low complexity; that stretch reads SASPSTAEPA. A tr-type G domain is found at 80 to 275; it reads DNVRNIAIVA…AIIRCVPGPN (196 aa).

This sequence belongs to the TRAFAC class translation factor GTPase superfamily. Classic translation factor GTPase family. BipA subfamily.

The protein localises to the plastid. The protein resides in the chloroplast. Putative chloroplastic elongation factor involved in response to chilling stress. Required for proper chloroplast rRNA processing and/or translation at low temperature. Involved in plastid protein homeostasis. The polypeptide is Putative elongation factor TypA-like SVR3, chloroplastic (SVR3) (Arabidopsis thaliana (Mouse-ear cress)).